The sequence spans 2878 residues: Trinucleotide repeat-containing gene 18 protein (2878 aa).

2 disordered regions span residues 1–54 (MDGR…KYMA) and 102–194 (TQKD…SSRL). Positions 119 to 128 (TPSSRTPSGH) are enriched in polar residues. 3 stretches are compositionally biased toward basic and acidic residues: residues 137 to 149 (SSRE…RAGR), 158 to 169 (GKKDPRAREEVS), and 179 to 194 (QEAR…SSRL). Ser199 bears the Phosphoserine mark. 12 disordered regions span residues 259–289 (ARPC…AGVY), 313–442 (FDER…KWKP), 487–507 (MPRA…AAHG), 540–655 (SPFG…DDEC), 865–1002 (AQEH…ALFT), 1033–1104 (ADGL…LESP), 1127–1146 (LEAQ…SEVS), 1171–1228 (LGTQ…DCDL), 1429–1535 (ELVK…DSSS), 1613–1668 (LGLS…DEDE), 1694–1718 (VPKN…RTLK), and 1737–1787 (EARS…GEQA). Pro residues predominate over residues 264 to 283 (SPLPPPPPLPPKGPPAPPSS). Basic and acidic residues-rich tracts occupy residues 327–337 (RDVRAREREPG) and 350–362 (RLER…EKSS). Positions 376–390 (PPAARSSRSSPDARA) are enriched in low complexity. Basic and acidic residues predominate over residues 396–411 (ELLKPEADPRPCERAP). Ser540 is modified (phosphoserine). A Glycyl lysine isopeptide (Lys-Gly) (interchain with G-Cter in SUMO2) cross-link involves residue Lys549. Basic and acidic residues-rich tracts occupy residues 580-589 (LKRDPERPES) and 865-881 (AQEH…KRSL). Positions 958 to 969 (SSPPPASPPPTP) are enriched in pro residues. Positions 972–993 (TRKEEAPENVVEKKDLELEKET) are enriched in basic and acidic residues. Residues Ser1053 and Ser1062 each carry the phosphoserine modification. A compositionally biased stretch (basic and acidic residues) spans 1068 to 1088 (EPPRDSPEEEQLADREVKAEV). Residues 1410-1442 (LDFRMRLAEVQRRYKEKQRELVKLQRRRDSGDR) adopt a coiled-coil conformation. The segment covering 1429-1448 (ELVKLQRRRDSGDRHEDAHR) has biased composition (basic and acidic residues). Over residues 1449–1463 (SLARRGPGRPRKRTH) the composition is skewed to basic residues. Ser1469 carries the phosphoserine modification. Over residues 1478 to 1492 (SSSGKGLSSKSLLTS) the composition is skewed to low complexity. Residues 1745 to 1775 (SSEEDSFDQDDSSEEEEEELEEEEEDEEEEG) show a composition bias toward acidic residues. Ser1789 and Ser1795 each carry phosphoserine. The span at 1825–1835 (EQKARKKEERQ) shows a compositional bias: basic and acidic residues. 3 disordered regions span residues 1825–2040 (EQKA…GAVS), 2052–2080 (FEAN…TPAP), and 2226–2681 (LLVP…RLPS). Positions 1876-1890 (AAPGPGSRASGPSSP) are enriched in low complexity. Composition is skewed to basic and acidic residues over residues 1891 to 1900 (DKAKLVSEKG), 1925 to 1936 (LWTRRRSERIFL), 1966 to 1978 (PRKD…DRKD), and 2024 to 2034 (RGKEAKKENRG). At Thr2077 the chain carries Phosphothreonine. Over residues 2238–2247 (TSKDTGEVKE) the composition is skewed to basic and acidic residues. Residues 2261 to 2270 (ARGRGRKPST) are compositionally biased toward basic residues. Basic and acidic residues-rich tracts occupy residues 2307–2316 (STPEPVDKRA) and 2409–2419 (AKEALLLREDP). Low complexity-rich tracts occupy residues 2460 to 2470 (EPGPGLPLEDP), 2491 to 2520 (TTSS…SGSE), and 2540 to 2578 (RTCS…SSST). The span at 2579–2591 (TDEDSSCSSDEEA) shows a compositional bias: acidic residues. The span at 2631–2641 (TQPPPQPPPQP) shows a compositional bias: pro residues. The residue at position 2681 (Ser2681) is a Phosphoserine. In terms of domain architecture, BAH spans 2727–2872 (EMIRIGDCAV…PTTGMIFSTD (146 aa)).

In Mus musculus (Mouse), this protein is Trinucleotide repeat-containing gene 18 protein (Tnrc18).